A 204-amino-acid polypeptide reads, in one-letter code: MIGKLKGTLEHIFEDYIVLDVHGVGYVVFISNRLRPSLPSVGEALSLFIETHVREEAIRLFGFATRAEQEWFCMLQNVPGVGAKVALAILGTLSPDELAQAIALNDVAMISRAPGVGKKVSERIVGELKSKTLPFEQAVKTVSVPQREITHQPAHDALSALMKLGFEREQAARALALAMNALEGEAVSSALLIRHSLKLLSSPT.

A domain I region spans residues 1–64; the sequence is MIGKLKGTLE…EEAIRLFGFA (64 aa). A domain II region spans residues 65-143; sequence TRAEQEWFCM…PFEQAVKTVS (79 aa). The segment at 144 to 154 is flexible linker; the sequence is VPQREITHQPA. Residues 154–204 form a domain III region; that stretch reads AHDALSALMKLGFEREQAARALALAMNALEGEAVSSALLIRHSLKLLSSPT.

The protein belongs to the RuvA family. Homotetramer. Forms an RuvA(8)-RuvB(12)-Holliday junction (HJ) complex. HJ DNA is sandwiched between 2 RuvA tetramers; dsDNA enters through RuvA and exits via RuvB. An RuvB hexamer assembles on each DNA strand where it exits the tetramer. Each RuvB hexamer is contacted by two RuvA subunits (via domain III) on 2 adjacent RuvB subunits; this complex drives branch migration. In the full resolvosome a probable DNA-RuvA(4)-RuvB(12)-RuvC(2) complex forms which resolves the HJ.

The protein localises to the cytoplasm. In terms of biological role, the RuvA-RuvB-RuvC complex processes Holliday junction (HJ) DNA during genetic recombination and DNA repair, while the RuvA-RuvB complex plays an important role in the rescue of blocked DNA replication forks via replication fork reversal (RFR). RuvA specifically binds to HJ cruciform DNA, conferring on it an open structure. The RuvB hexamer acts as an ATP-dependent pump, pulling dsDNA into and through the RuvAB complex. HJ branch migration allows RuvC to scan DNA until it finds its consensus sequence, where it cleaves and resolves the cruciform DNA. The sequence is that of Holliday junction branch migration complex subunit RuvA from Bartonella tribocorum (strain CIP 105476 / IBS 506).